The following is a 257-amino-acid chain: MLNLYGHKFSSRLMLGTAQYPSPAILRDAIHKSNTEIVTVSLRRETAGGKQGGQFWQFLKELDITVLPNTAGCYTVKEAVTTAKLARDLFKTSWIKLEIIGNPDTLQPNVFSLVEAAKILNSEGFKIFAYTTDDLIVAEKLLDVGCQVIMPWCAPIGSAKGPHNTDGLRSIRAYLPDVTLVIDAGIGRPSHATVAMELGYDAVLLNTAVAKAADPVLMAEAFSKAIQAGRMGYKAGILEARNVAVPSTPIIGKAVFS.

The Schiff-base intermediate with DXP role is filled by Lys-96. 1-deoxy-D-xylulose 5-phosphate-binding positions include Gly-157, 184–185 (AG), and 206–207 (NT).

This sequence belongs to the ThiG family. In terms of assembly, homotetramer. Forms heterodimers with either ThiH or ThiS.

The protein resides in the cytoplasm. The catalysed reaction is [ThiS sulfur-carrier protein]-C-terminal-Gly-aminoethanethioate + 2-iminoacetate + 1-deoxy-D-xylulose 5-phosphate = [ThiS sulfur-carrier protein]-C-terminal Gly-Gly + 2-[(2R,5Z)-2-carboxy-4-methylthiazol-5(2H)-ylidene]ethyl phosphate + 2 H2O + H(+). The protein operates within cofactor biosynthesis; thiamine diphosphate biosynthesis. In terms of biological role, catalyzes the rearrangement of 1-deoxy-D-xylulose 5-phosphate (DXP) to produce the thiazole phosphate moiety of thiamine. Sulfur is provided by the thiocarboxylate moiety of the carrier protein ThiS. In vitro, sulfur can be provided by H(2)S. This chain is Thiazole synthase, found in Bartonella henselae (strain ATCC 49882 / DSM 28221 / CCUG 30454 / Houston 1) (Rochalimaea henselae).